The chain runs to 389 residues: MIGNARMSQKYPTSSSRKRSPLSSGKYSAIGLLAYCRPGFEAECAQELQNIASLQFVYGYSKIDKGTGVVFWRCSQGNPLDVYKEIEVSRCIFARQVFCALHDIEIEDTTDRVSPVVEALRPGGAFGFLHIETPLEDEAGSLQKLAKKLTAPMSAALRNAGVLSKAKTDELPQLHLVCLSGQHIIAALAVHPNSSALPLGIPRLRFRNEAPSRSALKIEEAFLTMLTPAEREFVLKRGQRGVDLGAAPGGWTWYMVTQGVKMTAVDHGALQQELLEDPAVTYVSDDGYVYKPQRKVDWVVCDIVDKPKRTMERMADWLCYDWTTYALFNLKLPMKTRMDEVEACLQRLQERLLGADIESEVRVKQLYHDREEVTVLALTGHFLTAFQKH.

Positions 1-13 are enriched in polar residues; that stretch reads MIGNARMSQKYPT. Positions 1–24 are disordered; the sequence is MIGNARMSQKYPTSSSRKRSPLSS. S-adenosyl-L-methionine contacts are provided by residues Ser214, 247–250, Asp266, Asp286, and Asp302; that span reads APGG. Lys331 functions as the Proton acceptor in the catalytic mechanism.

It belongs to the class I-like SAM-binding methyltransferase superfamily. RNA methyltransferase RlmE family. RlmM subfamily. In terms of assembly, monomer.

It localises to the cytoplasm. The catalysed reaction is cytidine(2498) in 23S rRNA + S-adenosyl-L-methionine = 2'-O-methylcytidine(2498) in 23S rRNA + S-adenosyl-L-homocysteine + H(+). Its function is as follows. Catalyzes the 2'-O-methylation at nucleotide C2498 in 23S rRNA. The chain is Ribosomal RNA large subunit methyltransferase M from Hahella chejuensis (strain KCTC 2396).